A 677-amino-acid chain; its full sequence is Glutamine--fructose-6-phosphate aminotransferase [isomerizing] 1 (677 aa).

Cysteine 2 serves as the catalytic Nucleophile. One can recognise a Glutamine amidotransferase type-2 domain in the interval 2–269 (CGIFAYLNFH…DGEVVNLKDG (268 aa)). SIS domains are found at residues 353-492 (HLKT…DTIS) and 524-667 (LAQL…VDQP). Substrate is bound by residues 370 to 371 (TS), 415 to 417 (SQS), threonine 420, and histidine 571.

In terms of assembly, homotetramer, may also exist as homodimers. As to expression, highly expressed in flowers specifically in mature anthers, mature pollen grains and pollen tubes. Barely observed in roots, leaves and stems.

The enzyme catalyses D-fructose 6-phosphate + L-glutamine = D-glucosamine 6-phosphate + L-glutamate. The protein operates within nucleotide-sugar biosynthesis; UDP-N-acetyl-alpha-D-glucosamine biosynthesis; alpha-D-glucosamine 6-phosphate from D-fructose 6-phosphate: step 1/1. Functionally, controls the flux of glucose into the hexosamine biosynthetic pathway (HBP) leading to glucosamine (GlcN) content homeostasis. Involved in regulating the availability of precursors for N- and O-linked glycosylation of proteins. Required during pollen maturation and pollen tube formation by triggering polar deposition of pectin and callose in the pollen cell wall. Promotes tolerance to tunicamycin (Tm), an inhibitor of proteins N-glycosylation in endoplasmic reticulum (ER). This Arabidopsis thaliana (Mouse-ear cress) protein is Glutamine--fructose-6-phosphate aminotransferase [isomerizing] 1.